A 1390-amino-acid chain; its full sequence is Nuclear pore complex protein Nup155 (1390 aa).

O-linked (GlcNAc) serine glycosylation is present at serine 525. A disordered region spans residues 598–632 (GSPMYSSSPVPTGSPYPNPSSLGTPSHGAQPPTMS). Lysine 739 participates in a covalent cross-link: Glycyl lysine isopeptide (Lys-Gly) (interchain with G-Cter in SUMO2). The disordered stretch occupies residues 984 to 1011 (QSKAAPQSPSVPKKPGPPVLSSDPNMLS). Serine 1056 is subject to Phosphoserine.

It belongs to the non-repetitive/WGA-negative nucleoporin family. Interacts with GLE1. Able to form a heterotrimer with GLE1 and NUP42 in vitro. Forms a complex with NUP35, NUP93, NUP205 and lamin B. In terms of processing, phosphorylated. Phosphorylation and dephosphorylation may be important for the function of NUP155 and may play a role in the reversible disassembly of the nuclear pore complex during mitosis. Post-translationally, disulfide-linked to NUP62. The inner channel of the NPC has a different redox environment from the cytoplasm and allows the formation of interchain disulfide bonds between some nucleoporins, the significant increase of these linkages upon oxidative stress reduces the permeability of the NPC.

It is found in the nucleus. The protein resides in the nuclear pore complex. The protein localises to the nucleus membrane. Essential component of nuclear pore complex. Could be essessential for embryogenesis. Nucleoporins may be involved both in binding and translocating proteins during nucleocytoplasmic transport. In Rattus norvegicus (Rat), this protein is Nuclear pore complex protein Nup155 (Nup155).